Consider the following 214-residue polypeptide: Large ribosomal subunit protein uL3 (214 aa).

An N5-methylglutamine modification is found at Gln-155.

It belongs to the universal ribosomal protein uL3 family. Part of the 50S ribosomal subunit. Forms a cluster with proteins L14 and L19. In terms of processing, methylated by PrmB.

Functionally, one of the primary rRNA binding proteins, it binds directly near the 3'-end of the 23S rRNA, where it nucleates assembly of the 50S subunit. This chain is Large ribosomal subunit protein uL3, found in Acinetobacter baumannii (strain ACICU).